Reading from the N-terminus, the 57-residue chain is Large ribosomal subunit protein bL32 (57 aa).

Over residues 1–19 (MATPKRRMSRANTRSRRSQ) the composition is skewed to basic residues. Positions 1-20 (MATPKRRMSRANTRSRRSQW) are disordered.

This sequence belongs to the bacterial ribosomal protein bL32 family.

This chain is Large ribosomal subunit protein bL32, found in Mycobacterium marinum (strain ATCC BAA-535 / M).